Reading from the N-terminus, the 174-residue chain is U-stichotoxin-Hau2a (174 aa).

An N-terminal signal peptide occupies residues methionine 1–alanine 18. Residues lysine 19–proline 33 constitute a propeptide that is removed on maturation. Proline 39 carries the post-translational modification Hydroxyproline. Intrachain disulfides connect cysteine 40–cysteine 51 and cysteine 43–cysteine 58. A propeptide spanning residues arginine 61–proline 67 is cleaved from the precursor. Residue proline 73 is modified to Hydroxyproline. Disulfide bonds link cysteine 74–cysteine 85 and cysteine 77–cysteine 92. A propeptide spanning residues arginine 95–proline 101 is cleaved from the precursor. Proline 107 is subject to Hydroxyproline. Disulfide bonds link cysteine 108/cysteine 119 and cysteine 111/cysteine 126. The propeptide occupies arginine 129–proline 135. Position 141 is a hydroxyproline (proline 141). 2 disulfide bridges follow: cysteine 142/cysteine 153 and cysteine 145/cysteine 160. A propeptide spanning residues arginine 163–serine 174 is cleaved from the precursor.

It belongs to the sea anemone BBH family.

Its subcellular location is the secreted. The protein localises to the nematocyst. In terms of biological role, neurotoxin that paralyzes freshwater crabs at high concentration. The sequence is that of U-stichotoxin-Hau2a from Heteractis aurora (Banded sea anemone).